The following is a 348-amino-acid chain: MPVEALYWKDGRLYVLDQTRLPEETVYVTCSSYRDAAEAIKTMRVRGAPAIGAVGAFGLVLGALETGGDRESFLARLREIAGVLRDTRPTAVNLDWALERMLARAVETLGEPGALRAALLAEAQAIVREDIEANRRMGLFGRELIPDPARILTHCNAGALATAGYGTALGVIRAAREAGKQVKVFAGETRPFLQGARLTAWELMREGIEVVLVADNMAGYLMAREGLDLVIVGADRVAANGDVANKIGTYSLAVLARAHGIPFYVAVPLSTVDLRTAIGRDIPIEERDPAELTHFRGRRVAPQGVAVWNPAFDVTPNELITALITDAGVLKPPFGEALRRAVGSGRRE.

Substrate is bound by residues arginine 46–alanine 48, arginine 88, and glutamine 194. Catalysis depends on aspartate 235, which acts as the Proton donor. Asparagine 245–lysine 246 provides a ligand contact to substrate.

The protein belongs to the eIF-2B alpha/beta/delta subunits family. MtnA subfamily.

It carries out the reaction 5-(methylsulfanyl)-alpha-D-ribose 1-phosphate = 5-(methylsulfanyl)-D-ribulose 1-phosphate. It participates in amino-acid biosynthesis; L-methionine biosynthesis via salvage pathway; L-methionine from S-methyl-5-thio-alpha-D-ribose 1-phosphate: step 1/6. Its function is as follows. Catalyzes the interconversion of methylthioribose-1-phosphate (MTR-1-P) into methylthioribulose-1-phosphate (MTRu-1-P). The chain is Methylthioribose-1-phosphate isomerase from Desulforudis audaxviator (strain MP104C).